The chain runs to 160 residues: MPSFDVVSEVDKHELSNAVDQANRELATRFDFKGTDAKFELEGFVVTQVAPSAFQLKQMLDILRGRLSARGIDVRCLEVADPLENLGGARQKVTVRQGIEQPVAKKLIAAIKGAKLKVESQINGDKLRISGKKRDDLQEVIALLRKTDVDLPLQYQNFRD.

The protein belongs to the YajQ family.

Nucleotide-binding protein. The sequence is that of Nucleotide-binding protein Bpet3698 from Bordetella petrii (strain ATCC BAA-461 / DSM 12804 / CCUG 43448).